A 223-amino-acid polypeptide reads, in one-letter code: MKGILGRKVEMTQVFTNSGQLVPVTVVEVLPNTVLQVKTIDSDGYVAVQLGTTDKRVNLVNKPELGHFKKANSNPKRFVKEIRNMQGYEIGQVINVSDIFVSGEYVDVTGISKGKGFAGGIKRHNYSRGPMAHGSGYHRGIGSMGAIINRIFKSKKMPGHMGNAKRTIQNLEIIAIDQSNNIMLIKGSIPGPKNSFVQIKQNVKGMSSKQAVELLNRNASVQA.

The protein belongs to the universal ribosomal protein uL3 family. In terms of assembly, part of the 50S ribosomal subunit. Forms a cluster with proteins L14 and L19.

Functionally, one of the primary rRNA binding proteins, it binds directly near the 3'-end of the 23S rRNA, where it nucleates assembly of the 50S subunit. This Mycoplasma capricolum subsp. capricolum (strain California kid / ATCC 27343 / NCTC 10154) protein is Large ribosomal subunit protein uL3.